Here is a 266-residue protein sequence, read N- to C-terminus: ATP synthase subunit a (266 aa).

The next 6 helical transmembrane spans lie at 38–58 (KQML…ILAA), 99–119 (LLFS…IPVI), 126–146 (HVGG…IIGI), 162–182 (GVPW…NFLV), 191–211 (LFAT…GIEF), and 224–244 (SVLV…IMAL).

The protein belongs to the ATPase A chain family. F-type ATPases have 2 components, CF(1) - the catalytic core - and CF(0) - the membrane proton channel. CF(1) has five subunits: alpha(3), beta(3), gamma(1), delta(1), epsilon(1). CF(0) has three main subunits: a(1), b(2) and c(9-12). The alpha and beta chains form an alternating ring which encloses part of the gamma chain. CF(1) is attached to CF(0) by a central stalk formed by the gamma and epsilon chains, while a peripheral stalk is formed by the delta and b chains.

It localises to the cell membrane. Its function is as follows. Key component of the proton channel; it plays a direct role in the translocation of protons across the membrane. This chain is ATP synthase subunit a, found in Paenarthrobacter aurescens (strain TC1).